A 301-amino-acid polypeptide reads, in one-letter code: Mitochondrial substrate carrier family protein Z (301 aa).

Over 1–19 (MTGKEENKQQQHVNFPWKR) the chain is Mitochondrial intermembrane. Solcar repeat units lie at residues 14-101 (NFPW…FTEQ), 116-200 (QQFG…ISDY), and 210-293 (LPVW…VMGI). A helical transmembrane segment spans residues 20 to 37 (LVAGAVAGTADVWACHPL). Over 38–65 (DRIKTQLQNNPGKSIVGTFGDIVSKGKG) the chain is Mitochondrial matrix. A helical transmembrane segment spans residues 66–86 (FTGGVNALYEGILPMTAEAIF). The Mitochondrial intermembrane segment spans residues 87–117 (KVGIRYFAFSWFTEQYKTTVYKGETLNKKQQ). Residues 118–138 (FGANLLGGAFAGTIESFVVVI) form a helical membrane-spanning segment. The Mitochondrial matrix segment spans residues 139-174 (PCELLKVRHMTQEHNKSFGTVFRDVLREEGFQGLYK). Residues 175–191 (GGSATLLRQITNHMIRF) form a helical membrane-spanning segment. Over 192–212 (PTFYAISDYLKGGDHSVHLPV) the chain is Mitochondrial intermembrane. Residues 213 to 229 (WQNLSAGAIAGTASTLF) traverse the membrane as a helical segment. Residues 230–275 (NNPLDTIKTRMQKQGQNQTTMQVVRGIYQETGVKGYWAGVIPRILR) lie on the Mitochondrial matrix side of the membrane. Residues 276 to 296 (VAPGQAITWAVVELVMGILEP) traverse the membrane as a helical segment. At 297 to 301 (SSKKH) the chain is on the mitochondrial intermembrane side.

It belongs to the mitochondrial carrier (TC 2.A.29) family.

It is found in the mitochondrion inner membrane. Mitochondrial solute carriers shuttle metabolites, nucleotides, and cofactors through the mitochondrial inner membrane. The polypeptide is Mitochondrial substrate carrier family protein Z (mcfZ) (Dictyostelium discoideum (Social amoeba)).